Here is a 159-residue protein sequence, read N- to C-terminus: Putative RING-H2 finger protein ATL69 (159 aa).

A helical transmembrane segment spans residues 13-33 (LGYGIAIAVSILVLISFIMLA). Residues 94 to 136 (CSICLCDYEAREPVRCIPECNHCFHTDCVDEWLRTSATCPLCR) form an RING-type; atypical zinc finger.

It belongs to the RING-type zinc finger family. ATL subfamily.

It localises to the membrane. The enzyme catalyses S-ubiquitinyl-[E2 ubiquitin-conjugating enzyme]-L-cysteine + [acceptor protein]-L-lysine = [E2 ubiquitin-conjugating enzyme]-L-cysteine + N(6)-ubiquitinyl-[acceptor protein]-L-lysine.. The protein operates within protein modification; protein ubiquitination. The chain is Putative RING-H2 finger protein ATL69 (ATL69) from Arabidopsis thaliana (Mouse-ear cress).